Reading from the N-terminus, the 120-residue chain is Large ribosomal subunit protein uL18 (120 aa).

This sequence belongs to the universal ribosomal protein uL18 family. In terms of assembly, part of the 50S ribosomal subunit; part of the 5S rRNA/L5/L18/L25 subcomplex. Contacts the 5S and 23S rRNAs.

In terms of biological role, this is one of the proteins that bind and probably mediate the attachment of the 5S RNA into the large ribosomal subunit, where it forms part of the central protuberance. The protein is Large ribosomal subunit protein uL18 of Bacillus cereus (strain AH820).